A 180-amino-acid polypeptide reads, in one-letter code: ATP-dependent protease subunit HslV (180 aa).

Threonine 5 is an active-site residue. Na(+) is bound by residues glycine 165, cysteine 168, and threonine 171.

It belongs to the peptidase T1B family. HslV subfamily. As to quaternary structure, a double ring-shaped homohexamer of HslV is capped on each side by a ring-shaped HslU homohexamer. The assembly of the HslU/HslV complex is dependent on binding of ATP.

It localises to the cytoplasm. The catalysed reaction is ATP-dependent cleavage of peptide bonds with broad specificity.. Allosterically activated by HslU binding. Functionally, protease subunit of a proteasome-like degradation complex believed to be a general protein degrading machinery. This is ATP-dependent protease subunit HslV from Helicobacter pylori (strain P12).